The primary structure comprises 421 residues: D-amino-acid oxidase (421 aa).

FAD is bound by residues Ala-12, Gly-13, Ala-14, Val-15, Gly-47, Gly-64, Ile-65, Lys-225, Ala-226, Arg-359, Gly-385, Gly-388, and Leu-389. Arg-359 is a D-proline binding site. Residue Arg-359 coordinates D-serine.

The protein belongs to the DAMOX/DASOX family. It depends on FAD as a cofactor.

It is found in the cytoplasm. The protein localises to the secreted. The protein resides in the cell wall. The catalysed reaction is a D-alpha-amino acid + O2 + H2O = a 2-oxocarboxylate + H2O2 + NH4(+). In terms of biological role, catalyzes the oxidative deamination of D-amino acids with broad substrate specificity. The sequence is that of D-amino-acid oxidase from Bradyrhizobium diazoefficiens (strain JCM 10833 / BCRC 13528 / IAM 13628 / NBRC 14792 / USDA 110).